Here is a 322-residue protein sequence, read N- to C-terminus: tRNA U34 carboxymethyltransferase (322 aa).

Residues lysine 90, tryptophan 104, lysine 109, glycine 129, 151–153 (DPS), 180–181 (IE), methionine 196, tyrosine 200, and arginine 315 each bind carboxy-S-adenosyl-L-methionine.

The protein belongs to the class I-like SAM-binding methyltransferase superfamily. CmoB family. In terms of assembly, homotetramer.

It carries out the reaction carboxy-S-adenosyl-L-methionine + 5-hydroxyuridine(34) in tRNA = 5-carboxymethoxyuridine(34) in tRNA + S-adenosyl-L-homocysteine + H(+). Functionally, catalyzes carboxymethyl transfer from carboxy-S-adenosyl-L-methionine (Cx-SAM) to 5-hydroxyuridine (ho5U) to form 5-carboxymethoxyuridine (cmo5U) at position 34 in tRNAs. This is tRNA U34 carboxymethyltransferase from Cellvibrio japonicus (strain Ueda107) (Pseudomonas fluorescens subsp. cellulosa).